Consider the following 462-residue polypeptide: Proline--tRNA ligase (462 aa).

The protein belongs to the class-II aminoacyl-tRNA synthetase family. ProS type 3 subfamily. In terms of assembly, homodimer.

The protein resides in the cytoplasm. It catalyses the reaction tRNA(Pro) + L-proline + ATP = L-prolyl-tRNA(Pro) + AMP + diphosphate. Catalyzes the attachment of proline to tRNA(Pro) in a two-step reaction: proline is first activated by ATP to form Pro-AMP and then transferred to the acceptor end of tRNA(Pro). This is Proline--tRNA ligase from Thermoplasma volcanium (strain ATCC 51530 / DSM 4299 / JCM 9571 / NBRC 15438 / GSS1).